We begin with the raw amino-acid sequence, 208 residues long: Neuroendocrine protein 7B2 (208 aa).

Residues 1-26 (MGMYSAIPLALPMVLLMVYGLTPSLG) form the signal peptide. An intrachain disulfide couples C120 to C129. S204 carries the phosphoserine modification.

Belongs to the 7B2 family. As to quaternary structure, interacts with pcsk2 early in the secretory pathway. Dissociation occurs at later stages. Proteolytically cleaved in the Golgi by a furin-like convertase to generate bioactive peptides. Post-translationally, sulfated on tyrosine residues.

It localises to the secreted. In terms of biological role, acts as a molecular chaperone for pcsk2, preventing its premature activation in the regulated secretory pathway. Binds to inactive pcsk2 in the endoplasmic reticulum and facilitates its transport from there to later compartments of the secretory pathway where it is proteolytically matured and activated. Also required for cleavage of pcsk2 but does not appear to be involved in its folding. The polypeptide is Neuroendocrine protein 7B2 (scg5.L) (Xenopus laevis (African clawed frog)).